The primary structure comprises 431 residues: 3-isopropylmalate dehydratase large subunit (431 aa).

The [4Fe-4S] cluster site is built by C300, C360, and C363.

It belongs to the aconitase/IPM isomerase family. LeuC type 2 subfamily. In terms of assembly, heterodimer of LeuC and LeuD. [4Fe-4S] cluster serves as cofactor.

The enzyme catalyses (2R,3S)-3-isopropylmalate = (2S)-2-isopropylmalate. The protein operates within amino-acid biosynthesis; L-leucine biosynthesis; L-leucine from 3-methyl-2-oxobutanoate: step 2/4. Catalyzes the isomerization between 2-isopropylmalate and 3-isopropylmalate, via the formation of 2-isopropylmaleate. This is 3-isopropylmalate dehydratase large subunit from Sulfurihydrogenibium sp. (strain YO3AOP1).